Consider the following 349-residue polypeptide: UDP-N-acetylenolpyruvoylglucosamine reductase (349 aa).

An FAD-binding PCMH-type domain is found at 17–187; it reads VNESADLIIQ…TAITLRLNKQ (171 aa). Arg-163 is an active-site residue. Ser-233 serves as the catalytic Proton donor. Glu-328 is an active-site residue.

This sequence belongs to the MurB family. FAD is required as a cofactor.

The protein resides in the cytoplasm. It catalyses the reaction UDP-N-acetyl-alpha-D-muramate + NADP(+) = UDP-N-acetyl-3-O-(1-carboxyvinyl)-alpha-D-glucosamine + NADPH + H(+). It participates in cell wall biogenesis; peptidoglycan biosynthesis. Functionally, cell wall formation. This chain is UDP-N-acetylenolpyruvoylglucosamine reductase, found in Aliivibrio fischeri (strain ATCC 700601 / ES114) (Vibrio fischeri).